The sequence spans 451 residues: UPF0210 protein NMA1908 (451 aa).

It belongs to the UPF0210 family. Homodimer.

This chain is UPF0210 protein NMA1908, found in Neisseria meningitidis serogroup A / serotype 4A (strain DSM 15465 / Z2491).